The chain runs to 1119 residues: Transcriptional repressor NF-X1 homolog (1119 aa).

The tract at residues 1–214 is disordered; it reads MADTEGTSSS…EPLTEEETKI (214 aa). Residues 7 to 17 show a composition bias toward low complexity; that stretch reads TSSSIPTSTNS. A compositionally biased stretch (basic residues) spans 18-29; that stretch reads SRHRASRGRGGR. The span at 84–98 shows a compositional bias: low complexity; sequence ANFTFNPNAATFNPA. Residues 113–128 show a composition bias toward polar residues; sequence GASTHSNQNSRQQEPS. Over residues 143–154 the composition is skewed to basic and acidic residues; that stretch reads RQLEIQEQRGDS. The segment covering 157 to 167 has biased composition (low complexity); sequence QNQSRQNNRNQ. Polar residues predominate over residues 174-193; sequence ANQQNKSVQNPSRNPGNSRR. Residues 198–214 show a composition bias toward basic and acidic residues; it reads RRREQKEEPLTEEETKI. The RING-type; degenerate zinc finger occupies 235–287; the sequence is CAICYTRITTRQGVWSCKTCYHIFHISTGCITDWARSSRDKEGANTWRCPTCQ. 9 NF-X1-type zinc fingers span residues 330–348, 383–402, 439–458, 500–523, 565–584, 592–611, 649–668, 703–726, and 735–756; these read CPHP…ECKL, CGQH…ECTV, CGIH…ECET, CGTP…PCNL, CGMH…FCLQ, CGIH…PCLQ, CDHS…PCTQ, CGVH…KCTK, and CEHP…PCKA. In terms of domain architecture, R3H spans 867–937; the sequence is IDFVKSVEKI…KRSIVLTAVR (71 aa). Disordered stretches follow at residues 1024–1047 and 1078–1119; these read VDSD…PKDW and AAKK…ELLE. Residues 1032–1041 show a composition bias toward polar residues; that stretch reads NVPTTSNLVS. A compositionally biased stretch (acidic residues) spans 1086-1097; the sequence is PTWEDQCDEDAP.

This sequence belongs to the NFX1 family.

It is found in the nucleus. Its function is as follows. May play a role in transcription regulation. In Caenorhabditis elegans, this protein is Transcriptional repressor NF-X1 homolog (nfx-1).